The primary structure comprises 416 residues: tRNA(Met) cytidine acetate ligase (416 aa).

Residues 7–20 (VVEY…HLHH), Gly101, Asn162, and 187–188 (RI) contribute to the ATP site.

The protein belongs to the TmcAL family.

It is found in the cytoplasm. It carries out the reaction cytidine(34) in elongator tRNA(Met) + acetate + ATP = N(4)-acetylcytidine(34) in elongator tRNA(Met) + AMP + diphosphate. Its function is as follows. Catalyzes the formation of N(4)-acetylcytidine (ac(4)C) at the wobble position of elongator tRNA(Met), using acetate and ATP as substrates. First activates an acetate ion to form acetyladenylate (Ac-AMP) and then transfers the acetyl group to tRNA to form ac(4)C34. In Halalkalibacterium halodurans (strain ATCC BAA-125 / DSM 18197 / FERM 7344 / JCM 9153 / C-125) (Bacillus halodurans), this protein is tRNA(Met) cytidine acetate ligase.